The following is a 405-amino-acid chain: Eukaryotic initiation factor 4A (405 aa).

The short motif at 31 to 59 (ECFEALNLEGDLLRGIFAYGFEKPSAIQQ) is the Q motif element. The region spanning 62–232 (IKPILDGYDT…TQFMRDPKRI (171 aa)) is the Helicase ATP-binding domain. 75–82 (AQSGTGKT) serves as a coordination point for ATP. The DEAD box motif lies at 180–183 (DEAD). A Helicase C-terminal domain is found at 243–404 (GIRQFYVGVE…EMPMGITDIL (162 aa)).

Belongs to the DEAD box helicase family. eIF4A subfamily. EIF4F is a multi-subunit complex, the composition of which varies with external and internal environmental conditions. It is composed of at least EIF4A, EIF4E and EIF4G.

It catalyses the reaction ATP + H2O = ADP + phosphate + H(+). Its function is as follows. ATP-dependent RNA helicase which is a subunit of the eIF4F complex involved in cap recognition and is required for mRNA binding to ribosome. In the current model of translation initiation, eIF4A unwinds RNA secondary structures in the 5'-UTR of mRNAs which is necessary to allow efficient binding of the small ribosomal subunit, and subsequent scanning for the initiator codon. The sequence is that of Eukaryotic initiation factor 4A (EIF4-A) from Cryptosporidium parvum.